A 2250-amino-acid polypeptide reads, in one-letter code: DNA polymerase epsilon catalytic subunit A (2250 aa).

Disordered stretches follow at residues 1–63 (MPSR…GTAA), 235–259 (NGHG…DKEP), and 1990–2010 (PGTE…KAAS). The span at 32–41 (GGGGGGGGVA) shows a compositional bias: gly residues. The segment covering 249–259 (DDTKKKKDKEP) has biased composition (basic and acidic residues). Residues 1990–2000 (PGTEATSTMNP) are compositionally biased toward polar residues. Positions 2118, 2121, 2156, and 2159 each coordinate Zn(2+). A CysA-type zinc finger spans residues 2118–2159 (CKKCNAIRDVDLCRDPDRLPSVNPDSGEMLEPARKNWVCHKC). Residues Cys2190, Cys2193, Cys2205, and Cys2207 each coordinate [4Fe-4S] cluster. Residues 2190 to 2207 (CLKCSQTKSDNLAATCKC) carry the CysB motif motif.

It belongs to the DNA polymerase type-B family. As to quaternary structure, heterotetramer. Consists of 4 subunits: POL2, DPB2, DPB3 and DPB4. [4Fe-4S] cluster serves as cofactor.

The protein localises to the nucleus. The enzyme catalyses DNA(n) + a 2'-deoxyribonucleoside 5'-triphosphate = DNA(n+1) + diphosphate. Functionally, DNA polymerase II participates in chromosomal DNA replication. This is DNA polymerase epsilon catalytic subunit A (POL2) from Cryptococcus neoformans var. neoformans serotype D (strain JEC21 / ATCC MYA-565) (Filobasidiella neoformans).